The sequence spans 451 residues: Tubulin alpha-1 chain (451 aa).

Residue glutamine 11 participates in GTP binding. N6-acetyllysine is present on lysine 40. The GTP site is built by glutamate 71, threonine 145, threonine 179, asparagine 206, and asparagine 228. Glutamate 71 contacts Mg(2+). The active site involves glutamate 254. A disordered region spans residues glutamate 429–tyrosine 451. A compositionally biased stretch (acidic residues) spans aspartate 431–tyrosine 451.

Belongs to the tubulin family. As to quaternary structure, dimer of alpha and beta chains. A typical microtubule is a hollow water-filled tube with an outer diameter of 25 nm and an inner diameter of 15 nM. Alpha-beta heterodimers associate head-to-tail to form protofilaments running lengthwise along the microtubule wall with the beta-tubulin subunit facing the microtubule plus end conferring a structural polarity. Microtubules usually have 13 protofilaments but different protofilament numbers can be found in some organisms and specialized cells. Mg(2+) serves as cofactor. Undergoes a tyrosination/detyrosination cycle, the cyclic removal and re-addition of a C-terminal tyrosine residue by the enzymes tubulin tyrosine carboxypeptidase (TTCP) and tubulin tyrosine ligase (TTL), respectively. Post-translationally, acetylation of alpha chains at Lys-40 stabilizes microtubules and affects affinity and processivity of microtubule motors. This modification has a role in multiple cellular functions, ranging from cell motility, cell cycle progression or cell differentiation to intracellular trafficking and signaling.

It is found in the cytoplasm. The protein localises to the cytoskeleton. It carries out the reaction GTP + H2O = GDP + phosphate + H(+). Tubulin is the major constituent of microtubules, a cylinder consisting of laterally associated linear protofilaments composed of alpha- and beta-tubulin heterodimers. Microtubules grow by the addition of GTP-tubulin dimers to the microtubule end, where a stabilizing cap forms. Below the cap, tubulin dimers are in GDP-bound state, owing to GTPase activity of alpha-tubulin. This is Tubulin alpha-1 chain (TUBA1) from Anemia phyllitidis (Fern).